Consider the following 311-residue polypeptide: GTP cyclohydrolase FolE2 (311 aa).

It belongs to the GTP cyclohydrolase IV family.

It catalyses the reaction GTP + H2O = 7,8-dihydroneopterin 3'-triphosphate + formate + H(+). It functions in the pathway cofactor biosynthesis; 7,8-dihydroneopterin triphosphate biosynthesis; 7,8-dihydroneopterin triphosphate from GTP: step 1/1. Its function is as follows. Converts GTP to 7,8-dihydroneopterin triphosphate. The protein is GTP cyclohydrolase FolE2 of Xanthomonas campestris pv. campestris (strain B100).